Consider the following 434-residue polypeptide: Nicotinate phosphoribosyltransferase (434 aa).

Histidine 242 is subject to Phosphohistidine; by autocatalysis.

It belongs to the NAPRTase family. Transiently phosphorylated on a His residue during the reaction cycle. Phosphorylation strongly increases the affinity for substrates and increases the rate of nicotinate D-ribonucleotide production. Dephosphorylation regenerates the low-affinity form of the enzyme, leading to product release.

The catalysed reaction is nicotinate + 5-phospho-alpha-D-ribose 1-diphosphate + ATP + H2O = nicotinate beta-D-ribonucleotide + ADP + phosphate + diphosphate. The protein operates within cofactor biosynthesis; NAD(+) biosynthesis; nicotinate D-ribonucleotide from nicotinate: step 1/1. Its function is as follows. Catalyzes the synthesis of beta-nicotinate D-ribonucleotide from nicotinate and 5-phospho-D-ribose 1-phosphate at the expense of ATP. The chain is Nicotinate phosphoribosyltransferase from Brucella abortus (strain S19).